We begin with the raw amino-acid sequence, 115 residues long: Large ribosomal subunit protein bL20 (115 aa).

This sequence belongs to the bacterial ribosomal protein bL20 family.

Its function is as follows. Binds directly to 23S ribosomal RNA and is necessary for the in vitro assembly process of the 50S ribosomal subunit. It is not involved in the protein synthesizing functions of that subunit. The polypeptide is Large ribosomal subunit protein bL20 (Chlorobaculum parvum (strain DSM 263 / NCIMB 8327) (Chlorobium vibrioforme subsp. thiosulfatophilum)).